The primary structure comprises 231 residues: Ribose-5-phosphate isomerase A (231 aa).

Residues 28 to 31 (TGST), 83 to 86 (DGAD), and 96 to 99 (KGGG) each bind substrate. Residue E105 is the Proton acceptor of the active site. K123 contributes to the substrate binding site.

Belongs to the ribose 5-phosphate isomerase family. Homodimer.

The catalysed reaction is aldehydo-D-ribose 5-phosphate = D-ribulose 5-phosphate. It functions in the pathway carbohydrate degradation; pentose phosphate pathway; D-ribose 5-phosphate from D-ribulose 5-phosphate (non-oxidative stage): step 1/1. Catalyzes the reversible conversion of ribose-5-phosphate to ribulose 5-phosphate. This Parvibaculum lavamentivorans (strain DS-1 / DSM 13023 / NCIMB 13966) protein is Ribose-5-phosphate isomerase A.